Here is a 205-residue protein sequence, read N- to C-terminus: Small ribosomal subunit protein uS4c (205 aa).

Residues 93–154 (MRLDNTIFRL…RTQTIALIQQ (62 aa)) form the S4 RNA-binding domain.

Belongs to the universal ribosomal protein uS4 family. As to quaternary structure, part of the 30S ribosomal subunit. Contacts protein S5. The interaction surface between S4 and S5 is involved in control of translational fidelity.

Its subcellular location is the plastid. It localises to the chloroplast. One of the primary rRNA binding proteins, it binds directly to 16S rRNA where it nucleates assembly of the body of the 30S subunit. Its function is as follows. With S5 and S12 plays an important role in translational accuracy. The polypeptide is Small ribosomal subunit protein uS4c (rps4) (Chaetosphaeridium globosum (Charophycean green alga)).